Reading from the N-terminus, the 233-residue chain is Probable O-methyltransferase Rv1703c (233 aa).

S-adenosyl-L-methionine contacts are provided by residues Val55, Glu77, 79-80, and Glu102; that span reads GT. Asp157 contacts a divalent metal cation. Asp159 serves as a coordination point for S-adenosyl-L-methionine. Residues Asp185 and Asn186 each contribute to the a divalent metal cation site.

This sequence belongs to the class I-like SAM-binding methyltransferase superfamily. Cation-dependent O-methyltransferase family.

Functionally, specifically methylates an O atom of its substrate. The sequence is that of Probable O-methyltransferase Rv1703c from Mycobacterium tuberculosis (strain ATCC 25618 / H37Rv).